We begin with the raw amino-acid sequence, 85 residues long: UPF0291 protein SSA_1878 (85 aa).

Residues 58 to 85 form a disordered region; it reads GNDVTPEKLRQVQREKGLHGRSLDDPES. Over residues 62–85 the composition is skewed to basic and acidic residues; sequence TPEKLRQVQREKGLHGRSLDDPES.

It belongs to the UPF0291 family.

It localises to the cytoplasm. This Streptococcus sanguinis (strain SK36) protein is UPF0291 protein SSA_1878.